The following is a 506-amino-acid chain: Protein MGF 505-9R (506 aa).

ANK repeat units follow at residues 54 to 83 (SIHKALQIAASEGNEDIVKLLILWNGNLKY), 253 to 283 (QVDTVLFQAVKYNHRKILAHFIHHVPREIVE), and 313 to 343 (FVKKLLHAVVKHKFMLIIKLLLERPKKKINL).

This sequence belongs to the asfivirus MGF 505 family.

Its function is as follows. Plays a role in virus cell tropism, and may be required for efficient virus replication in macrophages. In African swine fever virus (isolate Tick/Malawi/Lil 20-1/1983) (ASFV), this protein is Protein MGF 505-9R.